Here is a 477-residue protein sequence, read N- to C-terminus: Glycogen synthase (477 aa).

Lysine 15 is a binding site for ADP-alpha-D-glucose.

It belongs to the glycosyltransferase 1 family. Bacterial/plant glycogen synthase subfamily.

The enzyme catalyses [(1-&gt;4)-alpha-D-glucosyl](n) + ADP-alpha-D-glucose = [(1-&gt;4)-alpha-D-glucosyl](n+1) + ADP + H(+). It participates in glycan biosynthesis; glycogen biosynthesis. Functionally, synthesizes alpha-1,4-glucan chains using ADP-glucose. In Anaeromyxobacter dehalogenans (strain 2CP-1 / ATCC BAA-258), this protein is Glycogen synthase.